Here is a 594-residue protein sequence, read N- to C-terminus: UvrABC system protein C (594 aa).

The region spanning 14-91 (DKPGCYLMKD…IKKHDPKYNV (78 aa)) is the GIY-YIG domain. The UVR domain occupies 196–231 (SDIKEQLRERMEKAAEDLDFERAKELRDTIAQMEKV).

It belongs to the UvrC family. Interacts with UvrB in an incision complex.

It localises to the cytoplasm. The UvrABC repair system catalyzes the recognition and processing of DNA lesions. UvrC both incises the 5' and 3' sides of the lesion. The N-terminal half is responsible for the 3' incision and the C-terminal half is responsible for the 5' incision. The chain is UvrABC system protein C from Shouchella clausii (strain KSM-K16) (Alkalihalobacillus clausii).